Reading from the N-terminus, the 323-residue chain is tRNA U34 carboxymethyltransferase (323 aa).

Residues Lys91, Trp105, Lys110, Gly130, 152 to 154 (DPT), 181 to 182 (IE), Met196, Tyr200, and Arg315 each bind carboxy-S-adenosyl-L-methionine.

The protein belongs to the class I-like SAM-binding methyltransferase superfamily. CmoB family. In terms of assembly, homotetramer.

It catalyses the reaction carboxy-S-adenosyl-L-methionine + 5-hydroxyuridine(34) in tRNA = 5-carboxymethoxyuridine(34) in tRNA + S-adenosyl-L-homocysteine + H(+). Functionally, catalyzes carboxymethyl transfer from carboxy-S-adenosyl-L-methionine (Cx-SAM) to 5-hydroxyuridine (ho5U) to form 5-carboxymethoxyuridine (cmo5U) at position 34 in tRNAs. The sequence is that of tRNA U34 carboxymethyltransferase from Escherichia coli O8 (strain IAI1).